We begin with the raw amino-acid sequence, 2352 residues long: Cell wall alpha-1,3-glucan synthase mok12 (2352 aa).

The tract at residues 1786–1813 is disordered; it reads SNDFGIREVPLSDANQSSQADSTSIDRY. The segment covering 1798–1813 has biased composition (polar residues); sequence DANQSSQADSTSIDRY.

The protein belongs to the glycosyltransferase group 1 family.

It carries out the reaction [(1-&gt;3)-alpha-D-glucosyl](n) + UDP-alpha-D-glucose = [(1-&gt;3)-alpha-D-glucosyl](n+1) + UDP + H(+). The sequence is that of Cell wall alpha-1,3-glucan synthase mok12 (mok12) from Schizosaccharomyces pombe (strain 972 / ATCC 24843) (Fission yeast).